Consider the following 435-residue polypeptide: 3-ketoacyl-CoA thiolase (435 aa).

Residue C98 is the Acyl-thioester intermediate of the active site. Residues H391 and C421 each act as proton acceptor in the active site.

This sequence belongs to the thiolase-like superfamily. Thiolase family. Heterotetramer of two alpha chains (FadJ) and two beta chains (FadI).

The protein localises to the cytoplasm. The enzyme catalyses an acyl-CoA + acetyl-CoA = a 3-oxoacyl-CoA + CoA. It functions in the pathway lipid metabolism; fatty acid beta-oxidation. In terms of biological role, catalyzes the final step of fatty acid oxidation in which acetyl-CoA is released and the CoA ester of a fatty acid two carbons shorter is formed. The protein is 3-ketoacyl-CoA thiolase of Vibrio vulnificus (strain YJ016).